Here is an 856-residue protein sequence, read N- to C-terminus: Translation initiation factor IF-2 (856 aa).

Disordered regions lie at residues 1-248 and 254-273; these read MSDN…ARAR and KRAR…QQKQ. Positions 22–38 are enriched in polar residues; that stretch reads ETGQVKQSFSHGRSNTV. The segment covering 83-93 has biased composition (pro residues); sequence APRPAPAPIPT. The segment covering 100-150 has biased composition (basic and acidic residues); sequence LERREQQERLLREAEEARMAALEETRRREERAKAEATEEERRRAEENRRAE. The segment covering 156-196 has biased composition (low complexity); it reads AAAAAAAAATAEAETAAAAPREEAPAAAGTAEEAPRTSSST. A compositionally biased stretch (pro residues) spans 197–209; it reads MPPPRRFTPVPSP. A compositionally biased stretch (basic and acidic residues) spans 210–229; that stretch reads KRPEPPRPQQRDRKGDDRRQ. A tr-type G domain is found at 356–526; the sequence is PRPPVVTIMG…ELQAELLELK (171 aa). Positions 365–372 are G1; sequence GHVDHGKT. Residue 365–372 coordinates GTP; sequence GHVDHGKT. The interval 390–394 is G2; that stretch reads GITQH. The segment at 412 to 415 is G3; sequence DTPG. GTP contacts are provided by residues 412-416 and 466-469; these read DTPGH and NKMD. The segment at 466–469 is G4; sequence NKMD. The segment at 502–504 is G5; sequence SAL.

The protein belongs to the TRAFAC class translation factor GTPase superfamily. Classic translation factor GTPase family. IF-2 subfamily.

Its subcellular location is the cytoplasm. In terms of biological role, one of the essential components for the initiation of protein synthesis. Protects formylmethionyl-tRNA from spontaneous hydrolysis and promotes its binding to the 30S ribosomal subunits. Also involved in the hydrolysis of GTP during the formation of the 70S ribosomal complex. In Rhizorhabdus wittichii (strain DSM 6014 / CCUG 31198 / JCM 15750 / NBRC 105917 / EY 4224 / RW1) (Sphingomonas wittichii), this protein is Translation initiation factor IF-2.